Consider the following 44-residue polypeptide: Defensin ARD1 (44 aa).

3 cysteine pairs are disulfide-bonded: cysteine 7–cysteine 32, cysteine 18–cysteine 40, and cysteine 22–cysteine 42.

It is found in the secreted. Functionally, possesses potent anti-fungal activity. In Archaeoprepona demophon (One-spotted leafwing butterfly), this protein is Defensin ARD1.